The sequence spans 466 residues: MSTRSVSSSSYRRMFGGSGTSSRPSSNRSYVTTSTRTYSLGSALRPSTSRSLYSSSPGGAYVTRSSAVRLRSSVPGVRLLQDSVDFSLADAINTEFKNTRTNEKVELQELNDRFANYIDKVRFLEQQNKILLAELEQLKGQGKSRLGDLYEEEMRELRRQVDQLTNDKARVEVERDNLAEDIMRLREKLQEEMLQREEAESTLQSFRQDVDNASLARLDLERKVESLQEEIAFLKKLHDEEIQELQAQIQEQHVQIDVDVSKPDLTAALRDVRQQYESVAAKNLQEAEEWYKSKFADLSEAANRNNDALRQAKQESNEYRRQVQSLTCEVDALKGTNESLERQMREMEENFALEAANYQDTIGRLQDEIQNMKEEMARHLREYQDLLNVKMALDIEIATYRKLLEGEESRISLPLPTFSSLNLRETNLESLPLVDTHSKRTLLIKTVETRDGQVINETSQHHDDLE.

Composition is skewed to low complexity over residues 1–13 (MSTR…SYRR) and 20–33 (TSSR…YVTT). The segment at 1-33 (MSTRSVSSSSYRRMFGGSGTSSRPSSNRSYVTT) is disordered. Ser-2 is subject to N-acetylserine. A head region spans residues 2–95 (STRSVSSSSY…FSLADAINTE (94 aa)). Ser-5 carries the post-translational modification Phosphoserine. Ser-7 bears the Phosphoserine; by PKA and PKC; alternate mark. A glycan (O-linked (GlcNAc) serine; alternate) is linked at Ser-7. Residue Ser-8 is modified to Phosphoserine. Phosphoserine; by PKC occurs at positions 9 and 10. The residue at position 20 (Thr-20) is a Phosphothreonine. The residue at position 21 (Ser-21) is a Phosphoserine; by PKC. Ser-25 carries the post-translational modification Phosphoserine; by PKA and PKC. Residue Ser-26 is modified to Phosphoserine; by PKC. Residue Thr-33 is glycosylated (O-linked (GlcNAc) threonine). O-linked (GlcNAc) serine; alternate glycosylation occurs at Ser-34. A Phosphoserine; by PKC; alternate modification is found at Ser-34. Ser-39 is modified (phosphoserine; by CaMK2, PKA, PKC and ROCK2). The residue at position 42 (Ser-42) is a Phosphoserine; by PKC. Phosphoserine; by PKA is present on Ser-47. Position 49 is a phosphoserine (Ser-49). At Ser-51 the chain carries Phosphoserine; by PKA and PKC. The residue at position 53 (Tyr-53) is a Phosphotyrosine. 2 positions are modified to phosphoserine: Ser-55 and Ser-56. Phosphotyrosine is present on Tyr-61. The residue at position 66 (Ser-66) is a Phosphoserine; by PKA and PKC. Ser-72 carries the post-translational modification Phosphoserine; by AURKB and ROCK2. The residue at position 73 (Ser-73) is a Phosphoserine. Ser-83 carries the phosphoserine; by CaMK2 modification. The residue at position 87 (Ser-87) is a Phosphoserine. The coil 1A stretch occupies residues 96 to 131 (FKNTRTNEKVELQELNDRFANYIDKVRFLEQQNKIL). A coiled-coil region spans residues 96–131 (FKNTRTNEKVELQELNDRFANYIDKVRFLEQQNKIL). One can recognise an IF rod domain in the interval 103–411 (EKVELQELND…KLLEGEESRI (309 aa)). Residue Lys-104 forms a Glycyl lysine isopeptide (Lys-Gly) (interchain with G-Cter in SUMO2) linkage. The residue at position 117 (Tyr-117) is a Phosphotyrosine. An N6-acetyllysine; alternate mark is found at Lys-120, Lys-129, and Lys-139. N6-succinyllysine; alternate occurs at positions 120 and 129. Residues Lys-120, Lys-129, and Lys-139 each participate in a glycyl lysine isopeptide (Lys-Gly) (interchain with G-Cter in SUMO2); alternate cross-link. Positions 132–153 (LAELEQLKGQGKSRLGDLYEEE) are linker 1. Ser-144 is modified (phosphoserine). Positions 154 to 245 (MRELRRQVDQ…KLHDEEIQEL (92 aa)) form a coiled coil. Positions 154–245 (MRELRRQVDQ…KLHDEEIQEL (92 aa)) are coil 1B. Residue Lys-168 is modified to N6-acetyllysine. Lys-188 carries the N6-acetyllysine; alternate modification. Residue Lys-188 is modified to N6-succinyllysine; alternate. Phosphoserine is present on Ser-214. Lys-223 is modified (N6-acetyllysine; alternate). A Glycyl lysine isopeptide (Lys-Gly) (interchain with G-Cter in SUMO2); alternate cross-link involves residue Lys-223. Ser-226 is subject to Phosphoserine. An N6-acetyllysine modification is found at Lys-235. The linker 12 stretch occupies residues 246–268 (QAQIQEQHVQIDVDVSKPDLTAA). A Glycyl lysine isopeptide (Lys-Gly) (interchain with G-Cter in SUMO2) cross-link involves residue Lys-262. Residues 269-407 (LRDVRQQYES…ATYRKLLEGE (139 aa)) are coil 2. Position 294 is an N6-acetyllysine; alternate (Lys-294). Lys-294 bears the N6-succinyllysine; alternate mark. A Glycyl lysine isopeptide (Lys-Gly) (interchain with G-Cter in SUMO2); alternate cross-link involves residue Lys-294. Residue Ser-299 is modified to Phosphoserine. A coiled-coil region spans residues 303–407 (NRNNDALRQA…ATYRKLLEGE (105 aa)). A Glycyl lysine isopeptide (Lys-Gly) (interchain with G-Cter in SUMO2) cross-link involves residue Lys-313. Ser-325 carries the post-translational modification Phosphoserine. A [IL]-x-C-x-x-[DE] motif motif is present at residues 326 to 329 (LTCE). Residue Lys-373 is modified to N6-acetyllysine; alternate. Lys-373 is covalently cross-linked (Glycyl lysine isopeptide (Lys-Gly) (interchain with G-Cter in SUMO2); alternate). The tract at residues 408 to 466 (ESRISLPLPTFSSLNLRETNLESLPLVDTHSKRTLLIKTVETRDGQVINETSQHHDDLE) is tail. Ser-409, Ser-412, Ser-419, and Ser-420 each carry phosphoserine. Position 426 is a phosphothreonine (Thr-426). Phosphoserine is present on Ser-430. Thr-436 carries the post-translational modification Phosphothreonine. Ser-438 is modified (phosphoserine). Residue Lys-439 forms a Glycyl lysine isopeptide (Lys-Gly) (interchain with G-Cter in SUMO2) linkage. Residue Lys-445 is modified to N6-acetyllysine; alternate. Residue Lys-445 is modified to N6-succinyllysine; alternate. Lys-445 is covalently cross-linked (Glycyl lysine isopeptide (Lys-Gly) (interchain with G-Cter in SUMO2); alternate). A Glycyl lysine isopeptide (Lys-Gly) (interchain with G-Cter in SUMO1); alternate cross-link involves residue Lys-445. Phosphothreonine occurs at positions 446 and 458. Phosphoserine is present on Ser-459.

This sequence belongs to the intermediate filament family. Homomer assembled from elementary dimers. Identified in complexes that contain VIM, EZR, AHNAK, BFSP1, BFSP2, ANK2, PLEC, PRX and spectrin. Interacts with BCAS3. Interacts with LGSN. Interacts with SYNM. Interacts (via rod region) with PLEC (via CH 1 domain). Interacts with PLEC isoform 1C. Interacts with STK33. Interacts with LARP6. Interacts with RAB8B. Interacts with TOR1A; the interaction associates TOR1A with the cytoskeleton. Interacts with TOR1AIP1. Interacts with DIAPH1. Interacts with EPPK1; interaction is dependent of higher-order structure of intermediate filament. Interacts with the non-receptor tyrosine kinase SRMS; the interaction leads to phosphorylation of VIM. Interacts with NOD2. Interacts (via head region) with CORO1C. Interacts with HDGF. Interacts with PRKCE (via phorbol-ester/DAG-type 2 domain). Interacts with BFSP2. Interacts with PPL. Interacts with PKP1 and PKP2. Interacts with SCRIB (via PDZ domains); the interaction protects SCRIB from proteasomal degradation and facilitates SCRIB localization to intermediate filaments, the interaction is reduced by cell contact inhibition. Phosphorylation by PKN1 inhibits the formation of filaments. Filament disassembly during mitosis is promoted by phosphorylation at Ser-55 as well as by nestin. One of the most prominent phosphoproteins in various cells of mesenchymal origin. Phosphorylation is enhanced during cell division, at which time vimentin filaments are significantly reorganized. Phosphorylated at Ser-56 by CDK5 during neutrophil secretion in the cytoplasm. Phosphorylated by STK33. Phosphorylated on tyrosine residues by SRMS. Post-translationally, S-nitrosylation is induced by interferon-gamma and oxidatively-modified low-densitity lipoprotein (LDL(ox)) possibly implicating the iNOS-S100A8/9 transnitrosylase complex. In terms of tissue distribution, detected in eye lens fiber cells (at protein level). Expressed in retinal lens epithelial cells (at protein level). Expressed in Langerhans cells in the epidermis (at protein level).

Its subcellular location is the cytoplasm. It localises to the cytoskeleton. It is found in the nucleus matrix. The protein resides in the cell membrane. Functionally, vimentins are class-III intermediate filaments found in various non-epithelial cells, especially mesenchymal cells. Vimentin is attached to the nucleus, endoplasmic reticulum, and mitochondria, either laterally or terminally. Plays a role in cell directional movement, orientation, cell sheet organization and Golgi complex polarization at the cell migration front. Protects SCRIB from proteasomal degradation and facilitates its localization to intermediate filaments in a cell contact-mediated manner. Involved with LARP6 in the stabilization of type I collagen mRNAs for CO1A1 and CO1A2. This Mus musculus (Mouse) protein is Vimentin.